An 84-amino-acid polypeptide reads, in one-letter code: MKKVLIAPIKFYQKFISPIFPASCRYRPTCSAYMIEAIEKHGLKGFLMGIARILRCHPFVEGGEDPVPNHFTLRRNKKEKPSKS.

A disordered region spans residues 63–84; sequence GEDPVPNHFTLRRNKKEKPSKS.

This sequence belongs to the UPF0161 family.

Its subcellular location is the cell membrane. In terms of biological role, could be involved in insertion of integral membrane proteins into the membrane. In Streptococcus mutans serotype c (strain ATCC 700610 / UA159), this protein is Putative membrane protein insertion efficiency factor.